The primary structure comprises 424 residues: Serine--tRNA ligase (424 aa).

Threonine 230–glutamate 232 contacts L-serine. Arginine 261 to glutamate 263 is a binding site for ATP. Glutamate 284 contacts L-serine. Position 348 to 351 (glutamate 348 to serine 351) interacts with ATP. An L-serine-binding site is contributed by serine 382.

The protein belongs to the class-II aminoacyl-tRNA synthetase family. Type-1 seryl-tRNA synthetase subfamily. Homodimer. The tRNA molecule binds across the dimer.

Its subcellular location is the cytoplasm. The catalysed reaction is tRNA(Ser) + L-serine + ATP = L-seryl-tRNA(Ser) + AMP + diphosphate + H(+). It carries out the reaction tRNA(Sec) + L-serine + ATP = L-seryl-tRNA(Sec) + AMP + diphosphate + H(+). The protein operates within aminoacyl-tRNA biosynthesis; selenocysteinyl-tRNA(Sec) biosynthesis; L-seryl-tRNA(Sec) from L-serine and tRNA(Sec): step 1/1. Functionally, catalyzes the attachment of serine to tRNA(Ser). Is also able to aminoacylate tRNA(Sec) with serine, to form the misacylated tRNA L-seryl-tRNA(Sec), which will be further converted into selenocysteinyl-tRNA(Sec). This Solibacter usitatus (strain Ellin6076) protein is Serine--tRNA ligase.